The sequence spans 428 residues: Acylglycerol kinase, mitochondrial (428 aa).

The segment at 18–34 (STVGFCLLAYGSHWLYG) is hydrophobic. A DAGKc domain is found at 61-202 (SAIKKATVFL…LDVLQIKGEQ (142 aa)).

The protein belongs to the AGK family. In terms of assembly, component of the TIM22 complex. It depends on Mg(2+) as a cofactor.

The protein localises to the mitochondrion inner membrane. It is found in the mitochondrion intermembrane space. The catalysed reaction is a monoacylglycerol + ATP = a monoacyl-sn-glycero-3-phosphate + ADP + H(+). It carries out the reaction a 1,2-diacyl-sn-glycerol + ATP = a 1,2-diacyl-sn-glycero-3-phosphate + ADP + H(+). It catalyses the reaction an N-acylsphing-4-enine + ATP = an N-acylsphing-4-enine 1-phosphate + ADP + H(+). The enzyme catalyses 1-(9Z-octadecenoyl)-sn-glycerol + ATP = 1-(9Z-octadecenoyl)-sn-glycero-3-phosphate + ADP + H(+). The catalysed reaction is 1,2-di-(9Z-octadecenoyl)-sn-glycerol + ATP = 1,2-di-(9Z-octadecenoyl)-sn-glycero-3-phosphate + ADP + H(+). It carries out the reaction a 1-acyl-sn-glycerol + ATP = a 1-acyl-sn-glycero-3-phosphate + ADP + H(+). It catalyses the reaction 1-hexadecanoyl-sn-glycerol + ATP = 1-hexadecanoyl-sn-glycero-3-phosphate + ADP + H(+). The enzyme catalyses a 2-acylglycerol + ATP = a 2-acyl-sn-glycerol 3-phosphate + ADP + H(+). The catalysed reaction is 2-(5Z,8Z,11Z,14Z-eicosatetraenoyl)-glycerol + ATP = 2-(5Z,8Z,11Z,14Z-eicosatetraenoyl)-sn-glycero-3-phosphate + ADP + H(+). It carries out the reaction 1-(5Z,8Z,11Z,14Z-eicosatetraenoyl)-sn-glycerol + ATP = 1-(5Z,8Z,11Z,14Z-eicosatetraenoyl)-sn-glycero-3-phosphate + ADP + H(+). It catalyses the reaction N-(hexanoyl)sphing-4-enine + ATP = N-hexanoylsphing-4-enine 1-phosphate + ADP + H(+). It functions in the pathway lipid metabolism; glycerolipid metabolism. In terms of biological role, lipid kinase that can phosphorylate both monoacylglycerol and diacylglycerol to form lysophosphatidic acid (LPA) and phosphatidic acid (PA), respectively. Phosphorylates ceramide but not sphingosine. Phosphorylates 1,2-dioleoylglycerol more rapidly than 2,3-dioleoylglycerol. Independently of its lipid kinase activity, acts as a component of the TIM22 complex. The TIM22 complex mediates the import and insertion of multi-pass transmembrane proteins into the mitochondrial inner membrane by forming a twin-pore translocase that uses the membrane potential as the external driving force. This is Acylglycerol kinase, mitochondrial from Xenopus laevis (African clawed frog).